A 90-amino-acid polypeptide reads, in one-letter code: Large ribosomal subunit protein bL27 (90 aa).

A disordered region spans residues 1–20 (MAHKKAGGSSRNGRDSAGKR).

Belongs to the bacterial ribosomal protein bL27 family.

This is Large ribosomal subunit protein bL27 from Rhodopseudomonas palustris (strain ATCC BAA-98 / CGA009).